The chain runs to 1404 residues: DNA-directed RNA polymerase subunit beta' (1404 aa).

C70, C72, C85, and C88 together coordinate Zn(2+). Mg(2+)-binding residues include D460, D462, and D464. Zn(2+) contacts are provided by C814, C888, C895, and C898.

This sequence belongs to the RNA polymerase beta' chain family. The RNAP catalytic core consists of 2 alpha, 1 beta, 1 beta' and 1 omega subunit. When a sigma factor is associated with the core the holoenzyme is formed, which can initiate transcription. It depends on Mg(2+) as a cofactor. Zn(2+) serves as cofactor.

The catalysed reaction is RNA(n) + a ribonucleoside 5'-triphosphate = RNA(n+1) + diphosphate. Functionally, DNA-dependent RNA polymerase catalyzes the transcription of DNA into RNA using the four ribonucleoside triphosphates as substrates. This is DNA-directed RNA polymerase subunit beta' from Buchnera aphidicola subsp. Baizongia pistaciae (strain Bp).